The chain runs to 395 residues: Argininosuccinate synthase (395 aa).

8–16 lines the ATP pocket; it reads AYSGGLDTS. Position 86 (Tyr86) interacts with L-citrulline. An ATP-binding site is contributed by Gly116. The L-aspartate site is built by Thr118, Asn122, and Asp123. Residue Asn122 coordinates L-citrulline. Arg126, Ser173, Ser182, Glu257, and Tyr269 together coordinate L-citrulline.

This sequence belongs to the argininosuccinate synthase family. Type 1 subfamily. In terms of assembly, homotetramer.

Its subcellular location is the cytoplasm. The catalysed reaction is L-citrulline + L-aspartate + ATP = 2-(N(omega)-L-arginino)succinate + AMP + diphosphate + H(+). The protein operates within amino-acid biosynthesis; L-arginine biosynthesis; L-arginine from L-ornithine and carbamoyl phosphate: step 2/3. The chain is Argininosuccinate synthase from Methanocaldococcus jannaschii (strain ATCC 43067 / DSM 2661 / JAL-1 / JCM 10045 / NBRC 100440) (Methanococcus jannaschii).